The sequence spans 294 residues: Tissue factor (294 aa).

The first 28 residues, 1-28 (MAILVRPRLLAALAPTFLGCLLLQVIAG), serve as a signal peptide directing secretion. Over 29–251 (AGIPEKAFNL…TEQWKSFLGE (223 aa)) the chain is Extracellular. Asn-37 and Asn-57 each carry an N-linked (GlcNAc...) asparagine glycan. The cysteines at positions 75 and 83 are disulfide-linked. Residues Asn-169 and Asn-200 are each glycosylated (N-linked (GlcNAc...) asparagine). The cysteines at positions 218 and 241 are disulfide-linked. Positions 245–247 (WKS) match the WKS motif motif. Residues 252-274 (TLIIVGAVVLLATIFIILLSISL) form a helical membrane-spanning segment. A lipid anchor (S-palmitoyl cysteine) is attached at Cys-275. Over 275-294 (CKRRKNRAGQKGKNTPSRLA) the chain is Cytoplasmic.

This sequence belongs to the tissue factor family. In terms of assembly, interacts with HSPE; the interaction, inhibited by heparin, promotes the generation of activated factor X and activates coagulation in the presence of activated factor VII.

The protein resides in the membrane. In terms of biological role, initiates blood coagulation by forming a complex with circulating factor VII or VIIa. The [TF:VIIa] complex activates factors IX or X by specific limited proteolysis. TF plays a role in normal hemostasis by initiating the cell-surface assembly and propagation of the coagulation protease cascade. This chain is Tissue factor (F3), found in Mus musculus (Mouse).